The primary structure comprises 343 residues: Heat-inducible transcription repressor HrcA (343 aa).

Belongs to the HrcA family.

In terms of biological role, negative regulator of class I heat shock genes (grpE-dnaK-dnaJ and groELS operons). Prevents heat-shock induction of these operons. This is Heat-inducible transcription repressor HrcA from Mycobacterium marinum (strain ATCC BAA-535 / M).